The primary structure comprises 264 residues: S-adenosylmethionine decarboxylase proenzyme (264 aa).

S112 acts as the Schiff-base intermediate with substrate; via pyruvic acid in catalysis. S112 carries the post-translational modification Pyruvic acid (Ser); by autocatalysis. H117 acts as the Proton acceptor; for processing activity in catalysis. C140 acts as the Proton donor; for catalytic activity in catalysis.

This sequence belongs to the prokaryotic AdoMetDC family. Type 2 subfamily. As to quaternary structure, heterooctamer of four alpha and four beta chains arranged as a tetramer of alpha/beta heterodimers. Pyruvate is required as a cofactor. Is synthesized initially as an inactive proenzyme. Formation of the active enzyme involves a self-maturation process in which the active site pyruvoyl group is generated from an internal serine residue via an autocatalytic post-translational modification. Two non-identical subunits are generated from the proenzyme in this reaction, and the pyruvate is formed at the N-terminus of the alpha chain, which is derived from the carboxyl end of the proenzyme. The post-translation cleavage follows an unusual pathway, termed non-hydrolytic serinolysis, in which the side chain hydroxyl group of the serine supplies its oxygen atom to form the C-terminus of the beta chain, while the remainder of the serine residue undergoes an oxidative deamination to produce ammonia and the pyruvoyl group blocking the N-terminus of the alpha chain.

The enzyme catalyses S-adenosyl-L-methionine + H(+) = S-adenosyl 3-(methylsulfanyl)propylamine + CO2. It participates in amine and polyamine biosynthesis; S-adenosylmethioninamine biosynthesis; S-adenosylmethioninamine from S-adenosyl-L-methionine: step 1/1. In terms of biological role, catalyzes the decarboxylation of S-adenosylmethionine to S-adenosylmethioninamine (dcAdoMet), the propylamine donor required for the synthesis of the polyamines spermine and spermidine from the diamine putrescine. This is S-adenosylmethionine decarboxylase proenzyme from Hamiltonella defensa subsp. Acyrthosiphon pisum (strain 5AT).